Here is a 145-residue protein sequence, read N- to C-terminus: Bacilliredoxin SAR1441 (145 aa).

This sequence belongs to the bacilliredoxin family.

This chain is Bacilliredoxin SAR1441, found in Staphylococcus aureus (strain MRSA252).